The primary structure comprises 89 residues: Small ribosomal subunit protein uS15 (89 aa).

The protein belongs to the universal ribosomal protein uS15 family. Part of the 30S ribosomal subunit. Forms a bridge to the 50S subunit in the 70S ribosome, contacting the 23S rRNA.

Functionally, one of the primary rRNA binding proteins, it binds directly to 16S rRNA where it helps nucleate assembly of the platform of the 30S subunit by binding and bridging several RNA helices of the 16S rRNA. In terms of biological role, forms an intersubunit bridge (bridge B4) with the 23S rRNA of the 50S subunit in the ribosome. This chain is Small ribosomal subunit protein uS15, found in Bartonella henselae (strain ATCC 49882 / DSM 28221 / CCUG 30454 / Houston 1) (Rochalimaea henselae).